We begin with the raw amino-acid sequence, 86 residues long: Probable weak neurotoxin NNAM1 (86 aa).

The signal sequence occupies residues 1-21 (MKTLLLSLVVVTIVCLDLGYT). 5 disulfide bridges follow: Cys24–Cys45, Cys27–Cys32, Cys38–Cys63, Cys67–Cys78, and Cys79–Cys84.

This sequence belongs to the three-finger toxin family. Ancestral subfamily. Orphan group II sub-subfamily. As to expression, expressed by the venom gland.

It localises to the secreted. Binds with low affinity to muscular (alpha-1-beta-1-delta-epsilon/CHRNA1-CHRNB1-CHRND-CHRNE) and very low affinity to neuronal (alpha-7/CHRNA7) nicotinic acetylcholine receptor (nAChR). The chain is Probable weak neurotoxin NNAM1 from Naja atra (Chinese cobra).